Here is a 338-residue protein sequence, read N- to C-terminus: MQVYYDKDCDLSIIQGKKVAILGYGSQGHAHACNLKDSGVDVVVGLRTGSTSIAKAEAHGLSVTDVPSAVAAADVVMVLTPDEFQAHLYKSDIEPNLKEGATLAFAHGFAIHYNQIVPRADLDVIMIAPKAPGHTVRTEFTKGGGIPDLIAIFQDASGSAKELALSYACGVGGGRTGIIETTFKDETETDLFGEQAVLCGGAVELVKAGFETLTEAGYAPEMAYFECLHELKLIVDLMYEGGIANMNYSISNNAEYGEYVTGPEVINDESRAAMRNALKRIQSGEYAKMFIAEGAHNYPSMTAARRNNAAHPIEQVGEKLRGMMPWIQANQIVDKTKN.

The 181-residue stretch at 1-181 (MQVYYDKDCD…GGGRTGIIET (181 aa)) folds into the KARI N-terminal Rossmann domain. NADP(+) contacts are provided by residues 24 to 27 (YGSQ), R47, S50, S52, and 82 to 85 (DEFQ). The active site involves H107. G133 lines the NADP(+) pocket. In terms of domain architecture, KARI C-terminal knotted spans 182–327 (TFKDETETDL…EKLRGMMPWI (146 aa)). The Mg(2+) site is built by D190, E194, E226, and E230. Residue S251 participates in substrate binding.

Belongs to the ketol-acid reductoisomerase family. Mg(2+) serves as cofactor.

The enzyme catalyses (2R)-2,3-dihydroxy-3-methylbutanoate + NADP(+) = (2S)-2-acetolactate + NADPH + H(+). It catalyses the reaction (2R,3R)-2,3-dihydroxy-3-methylpentanoate + NADP(+) = (S)-2-ethyl-2-hydroxy-3-oxobutanoate + NADPH + H(+). Its pathway is amino-acid biosynthesis; L-isoleucine biosynthesis; L-isoleucine from 2-oxobutanoate: step 2/4. It functions in the pathway amino-acid biosynthesis; L-valine biosynthesis; L-valine from pyruvate: step 2/4. Functionally, involved in the biosynthesis of branched-chain amino acids (BCAA). Catalyzes an alkyl-migration followed by a ketol-acid reduction of (S)-2-acetolactate (S2AL) to yield (R)-2,3-dihydroxy-isovalerate. In the isomerase reaction, S2AL is rearranged via a Mg-dependent methyl migration to produce 3-hydroxy-3-methyl-2-ketobutyrate (HMKB). In the reductase reaction, this 2-ketoacid undergoes a metal-dependent reduction by NADPH to yield (R)-2,3-dihydroxy-isovalerate. This is Ketol-acid reductoisomerase (NADP(+)) from Alcanivorax borkumensis (strain ATCC 700651 / DSM 11573 / NCIMB 13689 / SK2).